The following is a 642-amino-acid chain: Threonine--tRNA ligase (642 aa).

The 61-residue stretch at 1–61 (MPVITLPDGS…ENDAQLSIIT (61 aa)) folds into the TGS domain. The segment at 243 to 534 (DHRKIGKQLD…LTEEFAGFFP (292 aa)) is catalytic. Zn(2+) is bound by residues Cys-334, His-385, and His-511.

This sequence belongs to the class-II aminoacyl-tRNA synthetase family. As to quaternary structure, homodimer. It depends on Zn(2+) as a cofactor.

It is found in the cytoplasm. The enzyme catalyses tRNA(Thr) + L-threonine + ATP = L-threonyl-tRNA(Thr) + AMP + diphosphate + H(+). Catalyzes the attachment of threonine to tRNA(Thr) in a two-step reaction: L-threonine is first activated by ATP to form Thr-AMP and then transferred to the acceptor end of tRNA(Thr). Also edits incorrectly charged L-seryl-tRNA(Thr). The protein is Threonine--tRNA ligase of Enterobacter sp. (strain 638).